Reading from the N-terminus, the 666-residue chain is MIYKLYFAIALCFSLCFDLCIAESYVLDDKVGLGRTFDGIGGLSGGGATSRLLVNYAEPYRSQILDYLFKPNFGASLHILKVEIGGDAQTTDGTEPSHMHYENDENFFRGYEWWLMREAKKRNPNITLIGLPWAFPGWVGHGKNWPYDFPDITASYVVSWILGAKHYHDLNIDYVGIWNERNFDSKYIKLLRYTLDKSGLERVRIIASDNLWQPITYSLCVDQELADAVDVIGAHYPGTTTVIEALKTQKKLWSSEDYSTFNDEVGGGCWARILNQNYVNGLMTATISWNLVASYYEDLPFGRDGLMTAEEPWTGNYVVESPIWITAHTTQFSQPGWTYLQTVGHLVHGGSYVALTDSNGNLTVVIETMTHDHSVCIRPPLLPFNVTAQNVTFQLKGSFALIKELQVWQSRFDFKTKKPFFFKKLSPLKISDGSFTLSLDVDEVYTLTTISTGLKGTYPDPPTSGPFPKVYFDDFNVANPSFSEAPDFADQTGVFEYYINLTDPGPHVFTLRQVVTQMPVTWATDADQTISVIGDYKWQNLTVTCDVFMETVKTGGVFIAARVDKGGQSVRSAKGVFFWVFADGSYKVTNDLVGKTVLAEGLSGTRAYGWHTLTLTVEGQYATGLLNGYPLWKDAVVLGPKNGWAAIGTHSFELAQFDNFAVEAKL.

A signal peptide spans 1–22; it reads MIYKLYFAIALCFSLCFDLCIA. Substrate is bound at residue Thr-91. Asn-125 carries an N-linked (GlcNAc...) asparagine glycan. The substrate site is built by Trp-133 and Asn-179. Glu-180 acts as the Proton donor/acceptor in catalysis. Glu-256 functions as the Nucleophile in the catalytic mechanism. Cys-269 and Cys-376 are oxidised to a cystine. A glycan (N-linked (GlcNAc...) asparagine) is linked at Asn-361. Residue Arg-378 coordinates substrate. N-linked (GlcNAc...) asparagine glycans are attached at residues Asn-385, Asn-390, Asn-500, and Asn-540.

This sequence belongs to the glycosyl hydrolase 59 family.

Its subcellular location is the lysosome. It catalyses the reaction a beta-D-galactosyl-(1&lt;-&gt;1')-N-acylsphing-4-enine + H2O = an N-acylsphing-4-enine + D-galactose. The enzyme catalyses beta-D-galactosyl-(1&lt;-&gt;1)-sphing-4-enine + H2O = sphing-4-enine + D-galactose. It carries out the reaction a D-galactosylceramide + H2O = an N-acyl-sphingoid base + D-galactose. Hydrolyzes the galactose ester bonds of glycolipids such as galactosylceramide and galactosylsphingosine. The polypeptide is Galactocerebrosidase (Salmo salar (Atlantic salmon)).